The sequence spans 933 residues: Protein inturned (933 aa).

The tract at residues Met-1–Glu-54 is disordered. The span at Gly-37–Ser-48 shows a compositional bias: polar residues. The 79-residue stretch at Leu-186–Asn-264 folds into the PDZ domain. At Ser-675 the chain carries Phosphoserine. The tract at residues Leu-703–Glu-742 is disordered. Residues Pro-710 to Gly-719 show a composition bias toward low complexity. Over residues Pro-729–His-738 the composition is skewed to polar residues.

This sequence belongs to the inturned family. In terms of assembly, component of the CPLANE (ciliogenesis and planar polarity effectors) complex, composed of INTU, FUZ and WDPCP. Interacts with CPLANE1. Interacts with NPHP4 and DAAM1; INTU is mediating the interaction between NPHP4 and DAAM1.

It is found in the cytoplasm. The protein localises to the cell surface. It localises to the cytoskeleton. Its subcellular location is the cilium basal body. The protein resides in the microtubule organizing center. It is found in the centrosome. The protein localises to the centriole. Functionally, plays a key role in ciliogenesis and embryonic development. Regulator of cilia formation by controlling the organization of the apical actin cytoskeleton and the positioning of the basal bodies at the apical cell surface, which in turn is essential for the normal orientation of elongating ciliary microtubules. Plays a key role in definition of cell polarity via its role in ciliogenesis but not via conversion extension. Has an indirect effect on hedgehog signaling. Proposed to function as core component of the CPLANE (ciliogenesis and planar polarity effectors) complex involved in the recruitment of peripheral IFT-A proteins to basal bodies. Required for recruitment of CPLANE2 to the mother centriole. Binds phosphatidylinositol 3-phosphate with highest affinity, followed by phosphatidylinositol 4-phosphate and phosphatidylinositol 5-phosphate. The protein is Protein inturned (INTU) of Bos taurus (Bovine).